A 232-amino-acid polypeptide reads, in one-letter code: Succinyl-CoA:3-ketoacid coenzyme A transferase subunit A (232 aa).

Residue 24-30 (GGFGLCG) coordinates CoA.

The protein belongs to the 3-oxoacid CoA-transferase subunit A family. In terms of assembly, heterodimer of a subunit A and a subunit B.

It carries out the reaction a 3-oxo acid + succinyl-CoA = a 3-oxoacyl-CoA + succinate. The polypeptide is Succinyl-CoA:3-ketoacid coenzyme A transferase subunit A (scoA) (Helicobacter pylori (strain ATCC 700392 / 26695) (Campylobacter pylori)).